Here is a 197-residue protein sequence, read N- to C-terminus: Imidazoleglycerol-phosphate dehydratase (197 aa).

The protein belongs to the imidazoleglycerol-phosphate dehydratase family.

Its subcellular location is the cytoplasm. The catalysed reaction is D-erythro-1-(imidazol-4-yl)glycerol 3-phosphate = 3-(imidazol-4-yl)-2-oxopropyl phosphate + H2O. Its pathway is amino-acid biosynthesis; L-histidine biosynthesis; L-histidine from 5-phospho-alpha-D-ribose 1-diphosphate: step 6/9. The polypeptide is Imidazoleglycerol-phosphate dehydratase (Pseudomonas fluorescens (strain SBW25)).